A 32-amino-acid chain; its full sequence is Secreted protein F2 (32 aa).

The protein localises to the secreted. The polypeptide is Secreted protein F2 (Globisporangium hypogynum (Pythium hypogynum)).